The following is a 363-amino-acid chain: 3-dehydroquinate synthase (363 aa).

Residues 134–135 (TT), Lys147, Lys156, and 174–177 (TLIT) each bind NAD(+). Residues Glu189, His254, and His271 each contribute to the Zn(2+) site.

This sequence belongs to the sugar phosphate cyclases superfamily. Dehydroquinate synthase family. The cofactor is NAD(+). Co(2+) serves as cofactor. Requires Zn(2+) as cofactor.

The protein resides in the cytoplasm. It catalyses the reaction 7-phospho-2-dehydro-3-deoxy-D-arabino-heptonate = 3-dehydroquinate + phosphate. It functions in the pathway metabolic intermediate biosynthesis; chorismate biosynthesis; chorismate from D-erythrose 4-phosphate and phosphoenolpyruvate: step 2/7. In terms of biological role, catalyzes the conversion of 3-deoxy-D-arabino-heptulosonate 7-phosphate (DAHP) to dehydroquinate (DHQ). The polypeptide is 3-dehydroquinate synthase (Prochlorococcus marinus subsp. pastoris (strain CCMP1986 / NIES-2087 / MED4)).